The following is a 550-amino-acid chain: MWPQPRLPPHPAMSEKTQQGKLAAAKKKLKAYWQRKSPGIPAGANRKKKVNGSSPDTATSGGYHSPGDSATGVYGEGRASSTTLQDLESQYQELAVALDSSSAIISQLTENINSLVRTSKEEKKHEIHLVQKLGRSLFKLKNQTAEPLAPEPPAGPSKVEQLQDETNHLRKELESVGRQLQAEVENNQMLSLLNRRQEERLREQEERLHEQEERLHEQEERLCEQEERLREQEERLCEQEERLREQEERLCEQEERLREQEERLCEQEERLREQEERLCEQEERLREQEERLCEQEERLREQEERLCEQEERLREQEERLCEQEERLCEQEERLCEQEERLCEQEERLCEQEKLPGQERLLEEVEKLLEQERRQEEQERLLERERLLDEVEELLEQERLRQQDERLWQQETLRELERLRELERLRELERMLELGWEALYEQRAEPRSGFEELNNENKSTLQLEQQVKELEKSGGAEEPRGSESAAAARPVPGAPVPQGAWMCGQAGWTPQEHPGLSGEAVGTGEAAGGAEEAACHSFRAAENRELNITII.

The segment covering 1-11 has biased composition (pro residues); it reads MWPQPRLPPHP. Residues 1-77 form a disordered region; that stretch reads MWPQPRLPPH…DSATGVYGEG (77 aa). Residues 51 to 62 show a composition bias toward polar residues; it reads NGSSPDTATSGG. Residues 157 to 405 adopt a coiled-coil conformation; it reads SKVEQLQDET…QERLRQQDER (249 aa). The segment covering 467-480 has biased composition (basic and acidic residues); the sequence is KELEKSGGAEEPRG. The segment at 467–529 is disordered; sequence KELEKSGGAE…VGTGEAAGGA (63 aa). Composition is skewed to low complexity over residues 484 to 499 and 517 to 529; these read AAAARPVPGAPVPQGA and GEAVGTGEAAGGA.

Belongs to the GOLGA6 family.

The sequence is that of Putative golgin subfamily A member 6-like protein 19 (GOLGA6L19) from Homo sapiens (Human).